A 188-amino-acid chain; its full sequence is Elongation factor P-like protein (188 aa).

Belongs to the elongation factor P family.

This Aliivibrio fischeri (strain MJ11) (Vibrio fischeri) protein is Elongation factor P-like protein.